Consider the following 221-residue polypeptide: Membrane-bound lytic murein transglycosylase E (221 aa).

Belongs to the transglycosylase Slt family.

It catalyses the reaction Exolytic cleavage of the (1-&gt;4)-beta-glycosidic linkage between N-acetylmuramic acid (MurNAc) and N-acetylglucosamine (GlcNAc) residues in peptidoglycan, from either the reducing or the non-reducing ends of the peptidoglycan chains, with concomitant formation of a 1,6-anhydrobond in the MurNAc residue.. Its function is as follows. Murein-degrading enzyme. May play a role in recycling of muropeptides during cell elongation and/or cell division. This chain is Membrane-bound lytic murein transglycosylase E (mltE), found in Buchnera aphidicola subsp. Acyrthosiphon pisum (strain APS) (Acyrthosiphon pisum symbiotic bacterium).